The following is a 380-amino-acid chain: Transcription factor SOX-7 (380 aa).

Residues 24 to 43 (SDGLSPPAVPRPSGDKSSES) are disordered. Residues 45 to 113 (IRRPMNAFMV…QHMQDYPNYK (69 aa)) constitute a DNA-binding region (HMG box). The tract at residues 139 to 167 (SRDQNTLPEKNGIGRGEKEDRGEYSPGAT) is disordered. The 121-residue stretch at 260–380 (VSMMSSVSGC…ATYYNSYSVS (121 aa)) folds into the Sox C-terminal domain. Residues 323–328 (EFDQYL) are required for beta-catenin-binding.

In terms of assembly, interacts with CTNNB1/beta-catenin; this interaction may lead to the proteasomal degradation of active CTNNB1 and thus inhibition of Wnt/beta-catenin-stimulated transcription. As to expression, predominantly expressed in ovary, lung and heart. In the ovary, restricted to oocytes (at protein level). Present both in mesenchymal and epithelial cells in some adult tissues, including ear.

Its subcellular location is the nucleus. It is found in the cytoplasm. Functionally, binds to and activates the CDH5 promoter, hence plays a role in the transcriptional regulation of genes expressed in the hemogenic endothelium and blocks further differentiation into blood precursors. May be required for the survival of both hematopoietic and endothelial precursors during specification. May play a role in skeletal myogenesis and up-regulate the expression of muscle markers, such as PAX3/PAX7 and Meox1. Competes with GATA4 for binding and activation of the FGF3 promoter. Represses Wnt/beta-catenin-stimulated transcription. Probably acts by targeting CTNNB1 to proteasomal degradation. Binds the DNA sequence 5'-AACAAT-3'. This is Transcription factor SOX-7 (Sox7) from Mus musculus (Mouse).